The following is a 50-amino-acid chain: Sperm protamine P1 (50 aa).

Disulfide bonds link cysteine 7–cysteine 15 and cysteine 39–cysteine 47.

This sequence belongs to the protamine P1 family. Cross-linked by interchain disulfide bonds around the DNA-helix. As to expression, testis.

The protein resides in the nucleus. It localises to the chromosome. Functionally, protamines substitute for histones in the chromatin of sperm during the haploid phase of spermatogenesis. They compact sperm DNA into a highly condensed, stable and inactive complex. The sequence is that of Sperm protamine P1 (PRM1) from Oryctolagus cuniculus (Rabbit).